The sequence spans 1372 residues: DNA-directed RNA polymerase subunit beta (1372 aa).

This sequence belongs to the RNA polymerase beta chain family. In terms of assembly, the RNAP catalytic core consists of 2 alpha, 1 beta, 1 beta' and 1 omega subunit. When a sigma factor is associated with the core the holoenzyme is formed, which can initiate transcription.

It catalyses the reaction RNA(n) + a ribonucleoside 5'-triphosphate = RNA(n+1) + diphosphate. Functionally, DNA-dependent RNA polymerase catalyzes the transcription of DNA into RNA using the four ribonucleoside triphosphates as substrates. This chain is DNA-directed RNA polymerase subunit beta, found in Bradyrhizobium diazoefficiens (strain JCM 10833 / BCRC 13528 / IAM 13628 / NBRC 14792 / USDA 110).